We begin with the raw amino-acid sequence, 187 residues long: Phosphatidylethanolamine-binding protein 1 (187 aa).

Phosphoserine is present on residues Ser-6 and Ser-13. Thr-42 is modified (phosphothreonine). Residues Ser-52, Ser-54, Ser-98, and Ser-153 each carry the phosphoserine modification. An interaction with RAF1 region spans residues 93–134 (KGNDISSGTVLSDYVGSGPPKGTGLHRYVWLVYEQARPLKCD).

This sequence belongs to the phosphatidylethanolamine-binding protein family. In terms of assembly, has a tendency to form dimers by disulfide cross-linking. Interacts with RAF1 and this interaction is enhanced if RAF1 is phosphorylated on residues 'Ser-338', 'Ser-339', 'Tyr-340' and 'Tyr-341'. Interacts with ALOX15; in response to IL13/interleukin-13, prevents the interaction of PEBP1 with RAF1 to activate the ERK signaling cascade.

Its subcellular location is the cytoplasm. Functionally, binds ATP, opioids and phosphatidylethanolamine. Has lower affinity for phosphatidylinositol and phosphatidylcholine. Serine protease inhibitor which inhibits thrombin, neuropsin and chymotrypsin but not trypsin, tissue type plasminogen activator and elastase. Inhibits the kinase activity of RAF1 by inhibiting its activation and by dissociating the RAF1/MEK complex and acting as a competitive inhibitor of MEK phosphorylation. HCNP may be involved in the function of the presynaptic cholinergic neurons of the central nervous system. HCNP increases the production of choline acetyltransferase but not acetylcholinesterase. Seems to be mediated by a specific receptor. This is Phosphatidylethanolamine-binding protein 1 (PEBP1) from Macaca fascicularis (Crab-eating macaque).